A 431-amino-acid polypeptide reads, in one-letter code: Enolase (431 aa).

Gln167 contacts (2R)-2-phosphoglycerate. The Proton donor role is filled by Glu209. Mg(2+)-binding residues include Asp246, Glu289, and Asp316. Residues Lys341, Arg370, Ser371, and Lys392 each contribute to the (2R)-2-phosphoglycerate site. Lys341 acts as the Proton acceptor in catalysis.

Belongs to the enolase family. As to quaternary structure, component of the RNA degradosome, a multiprotein complex involved in RNA processing and mRNA degradation. Mg(2+) serves as cofactor.

The protein localises to the cytoplasm. It is found in the secreted. Its subcellular location is the cell surface. It carries out the reaction (2R)-2-phosphoglycerate = phosphoenolpyruvate + H2O. The protein operates within carbohydrate degradation; glycolysis; pyruvate from D-glyceraldehyde 3-phosphate: step 4/5. In terms of biological role, catalyzes the reversible conversion of 2-phosphoglycerate (2-PG) into phosphoenolpyruvate (PEP). It is essential for the degradation of carbohydrates via glycolysis. The polypeptide is Enolase (Shewanella sp. (strain ANA-3)).